A 383-amino-acid polypeptide reads, in one-letter code: Cytochrome b (383 aa).

4 helical membrane-spanning segments follow: residues 30 to 50, 74 to 96, 109 to 129, and 175 to 195; these read FGSL…LLAM, WILR…CHIG, TWIV…IGYV, and FFSL…AHLL. Residues H80 and H94 each contribute to the heme b site. Heme b-binding residues include H179 and H193. Position 198 (H198) interacts with a ubiquinone. 4 helical membrane passes run 221–241, 289–309, 320–340, and 345–365; these read FTIK…IIGI, GVLA…LDRS, AKFF…IGSA, and EPYV…FLVL.

The protein belongs to the cytochrome b family. As to quaternary structure, the main subunits of complex b-c1 are: cytochrome b, cytochrome c1 and the Rieske protein. Heme b is required as a cofactor.

It localises to the mitochondrion inner membrane. Component of the ubiquinol-cytochrome c reductase complex (complex III or cytochrome b-c1 complex) that is part of the mitochondrial respiratory chain. The b-c1 complex mediates electron transfer from ubiquinol to cytochrome c. Contributes to the generation of a proton gradient across the mitochondrial membrane that is then used for ATP synthesis. This is Cytochrome b (mt:Cyt-b) from Trichoplax adhaerens (Trichoplax reptans).